We begin with the raw amino-acid sequence, 372 residues long: Serine/threonine-protein kinase 17B (372 aa).

In terms of domain architecture, Protein kinase spans 33–293 (ILTSKELGRG…AEICLSHSWL (261 aa)). ATP-binding positions include 39–47 (LGRGKFAVV) and Lys62. Asp158 functions as the Proton acceptor in the catalytic mechanism. Residues 305-362 (EETSSSSQTQDHSVRSSEDKTSKSSCNGTCGDREDKENIPEDSSMVSKRFRFDDSLPN) form a disordered region. Residues 316-326 (HSVRSSEDKTS) are compositionally biased toward basic and acidic residues.

Belongs to the protein kinase superfamily. CAMK Ser/Thr protein kinase family. DAP kinase subfamily. Interacts with CHP1; the interaction induces CHP1 to translocate from the Golgi to the nucleus. Post-translationally, autophosphorylated. Highly expressed in placenta, lung, pancreas. Lower levels in heart, brain, liver, skeletal muscle and kidney.

It is found in the nucleus. It localises to the cell membrane. The protein resides in the endoplasmic reticulum-Golgi intermediate compartment. The catalysed reaction is L-seryl-[protein] + ATP = O-phospho-L-seryl-[protein] + ADP + H(+). It catalyses the reaction L-threonyl-[protein] + ATP = O-phospho-L-threonyl-[protein] + ADP + H(+). Its function is as follows. Phosphorylates myosin light chains. Acts as a positive regulator of apoptosis. The polypeptide is Serine/threonine-protein kinase 17B (STK17B) (Homo sapiens (Human)).